A 233-amino-acid polypeptide reads, in one-letter code: MAKLTKRMRTIREKVDATKQYDINEAVVLLKELATAKFVESVDVAVNLGIDARKSDQNVRGATVLPHGTGRSVRVAVFTQGANAEAAKAAGAELVGMEDLAELVKKGEMDFDVVIASPDAMRVVGQLGQILGPRGLMPNPKVGTVTPNVAEAVQNAKAGQVRYRNDKNGIIHTTIGKVDFDADKLKENLEALLVALKKGKPSSAKGIYIKKVSLSTTMGAGVAIDQSGLNASA.

This sequence belongs to the universal ribosomal protein uL1 family. In terms of assembly, part of the 50S ribosomal subunit.

Its function is as follows. Binds directly to 23S rRNA. The L1 stalk is quite mobile in the ribosome, and is involved in E site tRNA release. Protein L1 is also a translational repressor protein, it controls the translation of the L11 operon by binding to its mRNA. This Photorhabdus laumondii subsp. laumondii (strain DSM 15139 / CIP 105565 / TT01) (Photorhabdus luminescens subsp. laumondii) protein is Large ribosomal subunit protein uL1.